Consider the following 65-residue polypeptide: Sec-independent protein translocase protein TatA (65 aa).

A helical transmembrane segment spans residues 9–29 (ILIIVLLVVVVFGIGKLPQVG). The interval 43–65 (SSGEEEKEEVETKEETKTIEKSE) is disordered. A compositionally biased stretch (acidic residues) spans 45–54 (GEEEKEEVET). Residues 55–65 (KEETKTIEKSE) are compositionally biased toward basic and acidic residues.

It belongs to the TatA/E family. Forms a complex with TatC.

It localises to the cell membrane. Part of the twin-arginine translocation (Tat) system that transports large folded proteins containing a characteristic twin-arginine motif in their signal peptide across membranes. TatA could form the protein-conducting channel of the Tat system. This Dehalococcoides mccartyi (strain ATCC BAA-2266 / KCTC 15142 / 195) (Dehalococcoides ethenogenes (strain 195)) protein is Sec-independent protein translocase protein TatA.